Here is a 70-residue protein sequence, read N- to C-terminus: Cold shock-like protein CspF (70 aa).

Positions 7–67 constitute a CSD domain; that stretch reads GIVKTFDGKS…GLRGPSAANV (61 aa).

Its subcellular location is the cytoplasm. The chain is Cold shock-like protein CspF (cspF) from Escherichia coli (strain K12).